A 198-amino-acid polypeptide reads, in one-letter code: Rac-like GTP-binding protein ARAC3 (198 aa).

Residues 13-21 (GDGAVGKTC), 31-38 (FPTDYVPT), 60-64 (DTAGQ), and 118-121 (TKLD) each bind GTP. The short motif at 35–43 (YVPTVFDNF) is the Effector region element. A lipid anchor (S-palmitoyl cysteine) is attached at C158. A Cysteine methyl ester modification is found at C195. A lipid anchor (S-geranylgeranyl cysteine) is attached at C195. Positions 196–198 (SIL) are cleaved as a propeptide — removed in mature form.

It belongs to the small GTPase superfamily. Rho family. In terms of assembly, interacts with Rho GDP-dissociation inhibitor 1 and ICR1. Binds to SPK1 when in the inactive GDP-bound form. As to expression, ubiquitous. Preferentially expressed at the tip of root hairs.

It localises to the cytoplasm. The protein resides in the cell membrane. Its function is as follows. Inactive GDP-bound Rho GTPases reside in the cytosol, are found in a complex with Rho GDP-dissociation inhibitors (Rho GDIs), and are released from the GDI protein in order to translocate to membranes upon activation. Involved in cell polarity control during the actin-dependent tip growth of root hairs, thus regulating root hair length and root hair initiation. Contributes, in a SPK1-dependent manner, to the prevention of cortical microtubules organization into parallel arrays oriented perpendicular to the axis of cell elongation to limit anisotropic cell growth during petal development. SPK1-dependent activation is required for auxin-mediated inhibition of PIN2 internalization during gravitropic responses. This is Rac-like GTP-binding protein ARAC3 from Arabidopsis thaliana (Mouse-ear cress).